A 324-amino-acid chain; its full sequence is Probable 6-phosphogluconolactonase 4, chloroplastic (324 aa).

The N-terminal 63 residues, 1–63 (MSVSAAVAAA…PAMATDGAAA (63 aa)), are a transit peptide targeting the chloroplast. Residues 19–43 (ARHRSPPASRVAATSRGRPFSSGPH) are disordered.

The protein belongs to the glucosamine/galactosamine-6-phosphate isomerase family. 6-phosphogluconolactonase subfamily.

The protein localises to the plastid. Its subcellular location is the chloroplast. The catalysed reaction is 6-phospho-D-glucono-1,5-lactone + H2O = 6-phospho-D-gluconate + H(+). It participates in carbohydrate degradation; pentose phosphate pathway; D-ribulose 5-phosphate from D-glucose 6-phosphate (oxidative stage): step 2/3. Functionally, hydrolysis of 6-phosphogluconolactone to 6-phosphogluconate. In Oryza sativa subsp. japonica (Rice), this protein is Probable 6-phosphogluconolactonase 4, chloroplastic.